The sequence spans 1177 residues: MTGQLVQYGRHRQRRSYARISEVLELPNLIEIQTSSYQWFLDEGLREMFQDISPIEDFTGNLSLEFIDYSLGEPKYSVDECKERDVTYAAPLRVKVRLINKETGEVKEQDVFMGDFPLMTETGTFVINGAERVIVSQLVRSPSVYYSGKVDKNGKRGFTATVIPNRGAWLEYETDAKDVVYVRIDRTRKLPVTVLLRALGFGSDQEITELLGDNEYLSNTLEKDNTDSTEKALLEIYERLRPGEPPTVENAKSLLVSRFFDPKRYDLANVGRYKINKKLHIKNRLFNQRLAETLVDPETGEILAAEGTILDRRTLDRILPYLEKNIGFKTAKPMGGVVEGDVELQSIKIYAPESEGERVINVIGNANITRDVKHITPGDILASISYFFNLLYKVGDTDDIDHLGNRRLRSVGELLQNQFRIGLSRMERVVRERMSIQDTNAITPQALINIRPVIAAIKEFFGSSQLSQFMDQTNPLAELTHKRRLSALGPGGLTRERAGFEVRDVHYSHYGRMCPIETPEGPNIGLINSLSSFAKVNEFGFIETPYRRVDPETGLVTGHVDYLTADEEDNYVVAQANMKLSEEGEFLDEDIVARFRGENIVTNKERIDYMDVSPKQVVSAATACIPFLENDDSNRALMGANMQRQAVPLMNPESPIVGTGMEYVSAKDSGAAVICKHPGIVERVEAREVWVRRYVEVDGQTVKGDLDRYKMQKFIRSNQGTCYNQRPIVSVGNEVVKGEILADGPSMELGELALGRNVLVGFMTWDGYNYEDAIIMSERLVKDDVYTSIHIEEYESEARDTKLGPEEITRDIPNVGEDALRNLDERGIIRVGAEVKDGDLLVGKVTPKGVTELTAEERLLHAIFGEKAREVRDTSLRVPHGGGGIILDVKVFNREDGDELPPGVNQLVRAYIVQKRKISEGDKMAGRHGNKGVISRILPEEDMPYLPDGTPIDIMLNPLGVPSRMNIGQVLELHLGMAARYLGIHIATPVFDGAREEDVWGTIEEAGMANDAKTILYDGRTGEPFDNRVSVGVMYMIKLAHMVDDKLHARSTGPYSLVTQQPLGGKAQFGGQRFGEMEVWALEAYGAAYTLQEILTVKSDDVIGRVKTYEAIVKGENVPEPGVPESFKVLIKELQSLGMDVKMMSSDDTEIEMRDTEDDDDHQSADKLNVEVETTKE.

The span at 1147–1161 shows a compositional bias: acidic residues; sequence DDTEIEMRDTEDDDD. The interval 1147–1177 is disordered; the sequence is DDTEIEMRDTEDDDDHQSADKLNVEVETTKE. A compositionally biased stretch (basic and acidic residues) spans 1162–1177; it reads HQSADKLNVEVETTKE.

Belongs to the RNA polymerase beta chain family. As to quaternary structure, the RNAP catalytic core consists of 2 alpha, 1 beta, 1 beta' and 1 omega subunit. When a sigma factor is associated with the core the holoenzyme is formed, which can initiate transcription.

It carries out the reaction RNA(n) + a ribonucleoside 5'-triphosphate = RNA(n+1) + diphosphate. In terms of biological role, DNA-dependent RNA polymerase catalyzes the transcription of DNA into RNA using the four ribonucleoside triphosphates as substrates. This is DNA-directed RNA polymerase subunit beta from Bacillus anthracis (strain A0248).